Reading from the N-terminus, the 93-residue chain is Probable endoribonuclease MazF1 (93 aa).

This sequence belongs to the PemK/MazF family. In terms of assembly, forms a complex with cognate antitoxin MazE1.

Toxic component of a type II toxin-antitoxin (TA) system, its cognate antitoxin is MazE1. Probably an endoribonuclease. This chain is Probable endoribonuclease MazF1 (mazF1), found in Mycobacterium tuberculosis (strain ATCC 25618 / H37Rv).